The chain runs to 84 residues: Cytochrome b559 subunit alpha (84 aa).

A helical transmembrane segment spans residues 22 to 36 (VIHSITIPSLFVAGW). Histidine 24 provides a ligand contact to heme.

Belongs to the PsbE/PsbF family. As to quaternary structure, heterodimer of an alpha subunit and a beta subunit. PSII is composed of 1 copy each of membrane proteins PsbA, PsbB, PsbC, PsbD, PsbE, PsbF, PsbH, PsbI, PsbJ, PsbK, PsbL, PsbM, PsbT, PsbX, PsbY, PsbZ, Psb30/Ycf12, at least 3 peripheral proteins of the oxygen-evolving complex and a large number of cofactors. It forms dimeric complexes. Requires heme b as cofactor.

It is found in the plastid. The protein localises to the chloroplast thylakoid membrane. Its function is as follows. This b-type cytochrome is tightly associated with the reaction center of photosystem II (PSII). PSII is a light-driven water:plastoquinone oxidoreductase that uses light energy to abstract electrons from H(2)O, generating O(2) and a proton gradient subsequently used for ATP formation. It consists of a core antenna complex that captures photons, and an electron transfer chain that converts photonic excitation into a charge separation. The polypeptide is Cytochrome b559 subunit alpha (Gracilaria tenuistipitata var. liui (Red alga)).